Here is a 309-residue protein sequence, read N- to C-terminus: Serine/threonine-protein phosphatase 2A catalytic subunit alpha isoform (309 aa).

Residues aspartate 57, histidine 59, aspartate 85, and asparagine 117 each coordinate Mn(2+). Positions 57, 59, and 85 each coordinate Zn(2+). 2 residues coordinate Fe(3+): aspartate 85 and asparagine 117. The active-site Proton donor is the histidine 118. Mn(2+) contacts are provided by histidine 167 and histidine 241. Residues histidine 167 and histidine 241 each coordinate Fe(3+). Phosphotyrosine is present on tyrosine 307. Leucine 309 is modified (leucine methyl ester).

The protein belongs to the PPP phosphatase family. PP-1 subfamily. PP2A consists of a common heterodimeric core enzyme composed of PPP2CA, a 36 kDa catalytic subunit (subunit C), and PPP2R1A, a 65 kDa constant regulatory subunit (PR65 or subunit A), that associates with a variety of regulatory subunits. Proteins that associate with the core dimer include three families of regulatory subunits B (the R2/B/PR55/B55, R3/B''/PR72/PR130/PR59 and R5/B'/B56 families), the 48 kDa variable regulatory subunit, viral proteins, and cell signaling molecules. Interacts with the PP2A A subunit PPP2R1A. Interacts with the regulatory subunit PPP2R2A. Interacts (via C-terminus) with PTPA. Interacts with NXN; the interaction is direct. Interacts with KCTD20. Interacts with BTBD10. Interacts with SGO1 and SGO2. Interacts with RAF1. Interaction with IGBP1 protects unassembled PPP2CA from degradative ubiquitination. Interacts with GSK3B (via C2 domain). Interacts with MFHAS1; retains PPP2CA into the cytoplasm and excludes it from the nucleus. Interacts with PABIR1/FAM122A. Interacts with ADCY8; interaction is phosphatase activity-dependent; antagonizes interaction between ADCY8 and calmodulin. Interacts with CRTC3 (when phosphorylated at 'Ser-391'). Interacts with SPRY2; the interaction is inhibited by TESK1 interaction with SPRY2, possibly by vesicular sequestration of SPRY2. Interacts with TRAF3IP3. Interacts with AMBRA1 (via PxP motifs); enhancing interaction between PPP2CA and MYC or FOXO3. Forms a complex with AMBRA1 and BECN1; AMBRA1 and BECN1 components of the complex regulate MYC stability via different pathways. Part of the core of STRIPAK complexes composed of PP2A catalytic and scaffolding subunits, the striatins (PP2A regulatory subunits), the striatin-associated proteins MOB4, STRIP1 and STRIP2, PDCD10 and members of the STE20 kinases, such as STK24 and STK26. Phosphatase component of the Integrator-PP2A (INTAC) complex, composed of the Integrator core complex and protein phosphatase 2A subunits PPP2CA and PPP2R1A. Mn(2+) is required as a cofactor. Requires Fe(3+) as cofactor. It depends on Zn(2+) as a cofactor. Post-translationally, reversibly methyl esterified on Leu-309 by leucine carboxyl methyltransferase 1 (LCMT1) and protein phosphatase methylesterase 1 (PPME1). Carboxyl methylation influences the affinity of the catalytic subunit for the different regulatory subunits, thereby modulating the PP2A holoenzyme's substrate specificity, enzyme activity and cellular localization. Phosphorylation of either threonine (by autophosphorylation-activated protein kinase) or tyrosine results in inactivation of the phosphatase. Auto-dephosphorylation has been suggested as a mechanism for reactivation. In terms of processing, polyubiquitinated, leading to its degradation by the proteasome.

The protein resides in the cytoplasm. It is found in the nucleus. The protein localises to the chromosome. Its subcellular location is the centromere. It localises to the cytoskeleton. The protein resides in the spindle pole. It catalyses the reaction O-phospho-L-seryl-[protein] + H2O = L-seryl-[protein] + phosphate. It carries out the reaction O-phospho-L-threonyl-[protein] + H2O = L-threonyl-[protein] + phosphate. Inhibited by the interaction between PPP2R2A and ARPP19; this inhibition is enhanced when ARPP19 is phosphorylated. Inhibited by the interaction between PPP2R2A and PABIR1/FAM122A. Its function is as follows. Catalytic subunit of protein phosphatase 2A (PP2A), a serine/threonine phosphatase involved in the regulation of a wide variety of enzymes, signal transduction pathways, and cellular events. PP2A is the major phosphatase for microtubule-associated proteins (MAPs). PP2A can modulate the activity of phosphorylase B kinase casein kinase 2, mitogen-stimulated S6 kinase, and MAP-2 kinase. Cooperates with SGO2 to protect centromeric cohesin from separase-mediated cleavage in oocytes specifically during meiosis I. Can dephosphorylate various proteins, such as SV40 large T antigen, AXIN1, p53/TP53, PIM3, WEE1. Activates RAF1 by dephosphorylating it at 'Ser-259'. Mediates dephosphorylation of WEE1, preventing its ubiquitin-mediated proteolysis, increasing WEE1 protein levels, and promoting the G2/M checkpoint. Mediates dephosphorylation of MYC; promoting its ubiquitin-mediated proteolysis: interaction with AMBRA1 enhances interaction between PPP2CA and MYC. Mediates dephosphorylation of FOXO3; promoting its stabilization: interaction with AMBRA1 enhances interaction between PPP2CA and FOXO3. Catalyzes dephosphorylation of the pyrin domain of NLRP3, promoting assembly of the NLRP3 inflammasome. Together with RACK1 adapter, mediates dephosphorylation of AKT1 at 'Ser-473', preventing AKT1 activation and AKT-mTOR signaling pathway. Dephosphorylation of AKT1 is essential for regulatory T-cells (Treg) homeostasis and stability. Catalyzes dephosphorylation of PIM3, promotinh PIM3 ubiquitination and proteasomal degradation. Part of the striatin-interacting phosphatase and kinase (STRIPAK) complexes. STRIPAK complexes have critical roles in protein (de)phosphorylation and are regulators of multiple signaling pathways including Hippo, MAPK, nuclear receptor and cytoskeleton remodeling. Different types of STRIPAK complexes are involved in a variety of biological processes such as cell growth, differentiation, apoptosis, metabolism and immune regulation. Key mediator of a quality checkpoint during transcription elongation as part of the Integrator-PP2A (INTAC) complex. The INTAC complex drives premature transcription termination of transcripts that are unfavorably configured for transcriptional elongation: within the INTAC complex, PPP2CA catalyzes dephosphorylation of the C-terminal domain (CTD) of Pol II subunit POLR2A/RPB1 and SUPT5H/SPT5, thereby preventing transcriptional elongation. This is Serine/threonine-protein phosphatase 2A catalytic subunit alpha isoform (PPP2CA) from Homo sapiens (Human).